The following is a 367-amino-acid chain: Histidinol-phosphate aminotransferase (367 aa).

K221 carries the post-translational modification N6-(pyridoxal phosphate)lysine.

The protein belongs to the class-II pyridoxal-phosphate-dependent aminotransferase family. Histidinol-phosphate aminotransferase subfamily. In terms of assembly, homodimer. Pyridoxal 5'-phosphate is required as a cofactor.

The catalysed reaction is L-histidinol phosphate + 2-oxoglutarate = 3-(imidazol-4-yl)-2-oxopropyl phosphate + L-glutamate. It participates in amino-acid biosynthesis; L-histidine biosynthesis; L-histidine from 5-phospho-alpha-D-ribose 1-diphosphate: step 7/9. The chain is Histidinol-phosphate aminotransferase from Paracoccus denitrificans (strain Pd 1222).